We begin with the raw amino-acid sequence, 392 residues long: Formate-dependent phosphoribosylglycinamide formyltransferase (392 aa).

Residues 22–23 (EL) and E82 contribute to the N(1)-(5-phospho-beta-D-ribosyl)glycinamide site. Residues R114, K155, 160–165 (SSGKGQ), 195–198 (EGEV), and E203 each bind ATP. Positions 119-308 (RLAAETLALP…EFALHVRAFL (190 aa)) constitute an ATP-grasp domain. Positions 267 and 279 each coordinate Mg(2+). Residues D286, K355, and 362–363 (RR) each bind N(1)-(5-phospho-beta-D-ribosyl)glycinamide.

This sequence belongs to the PurK/PurT family. As to quaternary structure, homodimer.

The catalysed reaction is N(1)-(5-phospho-beta-D-ribosyl)glycinamide + formate + ATP = N(2)-formyl-N(1)-(5-phospho-beta-D-ribosyl)glycinamide + ADP + phosphate + H(+). It functions in the pathway purine metabolism; IMP biosynthesis via de novo pathway; N(2)-formyl-N(1)-(5-phospho-D-ribosyl)glycinamide from N(1)-(5-phospho-D-ribosyl)glycinamide (formate route): step 1/1. Its function is as follows. Involved in the de novo purine biosynthesis. Catalyzes the transfer of formate to 5-phospho-ribosyl-glycinamide (GAR), producing 5-phospho-ribosyl-N-formylglycinamide (FGAR). Formate is provided by PurU via hydrolysis of 10-formyl-tetrahydrofolate. This chain is Formate-dependent phosphoribosylglycinamide formyltransferase, found in Edwardsiella ictaluri (strain 93-146).